The chain runs to 104 residues: Protein ArtA (104 aa).

This Escherichia coli (strain K12) protein is Protein ArtA (artA).